A 494-amino-acid chain; its full sequence is Membrane-bound lytic murein transglycosylase F 1 (494 aa).

A signal peptide spans 1-24 (MRIMAVRLVAGAITLALMAYAWLA). The interval 25–270 (WERARDPEPI…TLLEEHFGHL (246 aa)) is non-LT domain. Residues 271-494 (GRFDYVGFRA…APLPADPPAD (224 aa)) form an LT domain region. Glutamate 317 is an active-site residue. The segment at 464 to 494 (QVPAGEALGEPPLPTPPAPPGAPLPADPPAD) is disordered. Pro residues predominate over residues 474 to 494 (PPLPTPPAPPGAPLPADPPAD).

It in the N-terminal section; belongs to the bacterial solute-binding protein 3 family. The protein in the C-terminal section; belongs to the transglycosylase Slt family.

The protein localises to the cell outer membrane. It catalyses the reaction Exolytic cleavage of the (1-&gt;4)-beta-glycosidic linkage between N-acetylmuramic acid (MurNAc) and N-acetylglucosamine (GlcNAc) residues in peptidoglycan, from either the reducing or the non-reducing ends of the peptidoglycan chains, with concomitant formation of a 1,6-anhydrobond in the MurNAc residue.. Its function is as follows. Murein-degrading enzyme that degrades murein glycan strands and insoluble, high-molecular weight murein sacculi, with the concomitant formation of a 1,6-anhydromuramoyl product. Lytic transglycosylases (LTs) play an integral role in the metabolism of the peptidoglycan (PG) sacculus. Their lytic action creates space within the PG sacculus to allow for its expansion as well as for the insertion of various structures such as secretion systems and flagella. The sequence is that of Membrane-bound lytic murein transglycosylase F 1 from Alkalilimnicola ehrlichii (strain ATCC BAA-1101 / DSM 17681 / MLHE-1).